The sequence spans 211 residues: Redox-sensing transcriptional repressor Rex (211 aa).

Positions 17-56 (KYHRYLEELLRNEVDRISSKELSKKIGFTASQIRQDFNCF) form a DNA-binding region, H-T-H motif. 91–96 (GGGNIG) lines the NAD(+) pocket.

This sequence belongs to the transcriptional regulatory Rex family. As to quaternary structure, homodimer.

It localises to the cytoplasm. Modulates transcription in response to changes in cellular NADH/NAD(+) redox state. This chain is Redox-sensing transcriptional repressor Rex, found in Clostridium tetani (strain Massachusetts / E88).